The sequence spans 306 residues: Oxygen-dependent coproporphyrinogen-III oxidase (306 aa).

Position 94 (Ser-94) interacts with substrate. Residues His-98 and His-108 each contribute to the a divalent metal cation site. The active-site Proton donor is the His-108. Position 110–112 (110–112 (NVR)) interacts with substrate. Residues His-147 and His-177 each coordinate a divalent metal cation. The important for dimerization stretch occupies residues 242–277 (YVEFNLVYDRGTLFGLQTGGRTESILMSMPPLVRWE). Residue 260–262 (GGR) coordinates substrate.

This sequence belongs to the aerobic coproporphyrinogen-III oxidase family. As to quaternary structure, homodimer. A divalent metal cation serves as cofactor.

It is found in the cytoplasm. The enzyme catalyses coproporphyrinogen III + O2 + 2 H(+) = protoporphyrinogen IX + 2 CO2 + 2 H2O. Its pathway is porphyrin-containing compound metabolism; protoporphyrin-IX biosynthesis; protoporphyrinogen-IX from coproporphyrinogen-III (O2 route): step 1/1. Involved in the heme biosynthesis. Catalyzes the aerobic oxidative decarboxylation of propionate groups of rings A and B of coproporphyrinogen-III to yield the vinyl groups in protoporphyrinogen-IX. This is Oxygen-dependent coproporphyrinogen-III oxidase from Shewanella woodyi (strain ATCC 51908 / MS32).